A 194-amino-acid polypeptide reads, in one-letter code: Crossover junction endodeoxyribonuclease RuvC (194 aa).

Active-site residues include Asp-8, Glu-72, and Asp-144. The Mg(2+) site is built by Asp-8, Glu-72, and Asp-144.

It belongs to the RuvC family. In terms of assembly, homodimer which binds Holliday junction (HJ) DNA. The HJ becomes 2-fold symmetrical on binding to RuvC with unstacked arms; it has a different conformation from HJ DNA in complex with RuvA. In the full resolvosome a probable DNA-RuvA(4)-RuvB(12)-RuvC(2) complex forms which resolves the HJ. Mg(2+) is required as a cofactor.

It localises to the cytoplasm. The enzyme catalyses Endonucleolytic cleavage at a junction such as a reciprocal single-stranded crossover between two homologous DNA duplexes (Holliday junction).. In terms of biological role, the RuvA-RuvB-RuvC complex processes Holliday junction (HJ) DNA during genetic recombination and DNA repair. Endonuclease that resolves HJ intermediates. Cleaves cruciform DNA by making single-stranded nicks across the HJ at symmetrical positions within the homologous arms, yielding a 5'-phosphate and a 3'-hydroxyl group; requires a central core of homology in the junction. The consensus cleavage sequence is 5'-(A/T)TT(C/G)-3'. Cleavage occurs on the 3'-side of the TT dinucleotide at the point of strand exchange. HJ branch migration catalyzed by RuvA-RuvB allows RuvC to scan DNA until it finds its consensus sequence, where it cleaves and resolves the cruciform DNA. The protein is Crossover junction endodeoxyribonuclease RuvC of Psychrobacter arcticus (strain DSM 17307 / VKM B-2377 / 273-4).